Consider the following 63-residue polypeptide: MVQRCLVVALLVVVVAAALCSAQLNFTPNWGTGKRDAADFGDPYSFLYRLIQAEARKMSGCSN.

Positions 1 to 22 (MVQRCLVVALLVVVVAAALCSA) are cleaved as a signal peptide. Gln-23 is modified (pyrrolidone carboxylic acid). Thr-32 bears the Threonine amide mark.

The protein belongs to the AKH/HRTH/RPCH family. Adipokinetic hormone precursor-related peptide (APRP) can form three type of disulfide-bond dimers: p1 (alpha-alpha), p2 (alpha-beta), and p3 (beta-beta).

It is found in the secreted. Its function is as follows. This hormone, released from cells in the corpora cardiaca, causes release of diglycerides from the fat body and stimulation of muscles to use these diglycerides as an energy source during energy-demanding processes. The sequence is that of Adipokinetic prohormone type 1 from Schistocerca gregaria (Desert locust).